A 148-amino-acid chain; its full sequence is NADPH-dependent 7-cyano-7-deazaguanine reductase (148 aa).

The active-site Thioimide intermediate is the Cys-50. Residue Asp-57 is the Proton donor of the active site. Residues Val-72–Ser-74 and His-91–Glu-92 each bind substrate.

It belongs to the GTP cyclohydrolase I family. QueF type 1 subfamily.

The protein resides in the cytoplasm. The catalysed reaction is 7-aminomethyl-7-carbaguanine + 2 NADP(+) = 7-cyano-7-deazaguanine + 2 NADPH + 3 H(+). The protein operates within tRNA modification; tRNA-queuosine biosynthesis. Functionally, catalyzes the NADPH-dependent reduction of 7-cyano-7-deazaguanine (preQ0) to 7-aminomethyl-7-deazaguanine (preQ1). The polypeptide is NADPH-dependent 7-cyano-7-deazaguanine reductase (Helicobacter pylori (strain ATCC 700392 / 26695) (Campylobacter pylori)).